The sequence spans 338 residues: D-erythrose-4-phosphate dehydrogenase (338 aa).

12–13 (RI) is an NAD(+) binding site. Substrate-binding positions include 154-156 (SCT), Arg-200, 213-214 (TK), and Arg-236. Cys-155 (nucleophile) is an active-site residue. Asn-318 lines the NAD(+) pocket.

The protein belongs to the glyceraldehyde-3-phosphate dehydrogenase family. Epd subfamily. In terms of assembly, homotetramer.

It is found in the cytoplasm. The enzyme catalyses D-erythrose 4-phosphate + NAD(+) + H2O = 4-phospho-D-erythronate + NADH + 2 H(+). It functions in the pathway cofactor biosynthesis; pyridoxine 5'-phosphate biosynthesis; pyridoxine 5'-phosphate from D-erythrose 4-phosphate: step 1/5. Functionally, catalyzes the NAD-dependent conversion of D-erythrose 4-phosphate to 4-phosphoerythronate. The protein is D-erythrose-4-phosphate dehydrogenase of Tolumonas auensis (strain DSM 9187 / NBRC 110442 / TA 4).